Consider the following 230-residue polypeptide: uncharacterized protein (230 aa).

The chain crosses the membrane as a helical span at residues 19 to 39; the sequence is GIFQVLLQLVLAMMTVWDFAG. Residue Asn-41 is glycosylated (N-linked (GlcNAc...) asparagine; by host). The helical transmembrane segment at 55 to 75 threads the bilayer; it reads SFLLVLYTGLKQILEYMFSIC. N-linked (GlcNAc...) asparagine; by host glycosylation is found at Asn-86, Asn-157, Asn-168, and Asn-182. Residues 172–196 are a coiled coil; the sequence is TNLHKYQNDENDTEEDSEDIEKNSD. Positions 178–205 are disordered; it reads QNDENDTEEDSEDIEKNSDPKENSDIDS. Residues 180 to 190 are compositionally biased toward acidic residues; that stretch reads DENDTEEDSED. Residues 191-201 show a composition bias toward basic and acidic residues; sequence IEKNSDPKENS.

It localises to the membrane. This is an uncharacterized protein from Acanthamoeba polyphaga mimivirus (APMV).